The following is a 472-amino-acid chain: Chromosomal replication initiator protein DnaA (472 aa).

The domain I, interacts with DnaA modulators stretch occupies residues 1-73 (MSNMEHDRWS…LTCWQAEMPE (73 aa)). The tract at residues 73 to 128 (EVCRIDLTVRSPMRAAVTKEAPAPAEHRRDEHRPAADARSHAAAPAPSNHDALGGS) is domain II. Residues 89-127 (VTKEAPAPAEHRRDEHRPAADARSHAAAPAPSNHDALGG) are disordered. A compositionally biased stretch (basic and acidic residues) spans 97–112 (AEHRRDEHRPAADARS). Residues 113–124 (HAAAPAPSNHDA) show a composition bias toward low complexity. The tract at residues 129 to 351 (PLDPRLTFAS…GAINRLLAHS (223 aa)) is domain III, AAA+ region. Positions 176, 178, 179, and 180 each coordinate ATP. Positions 352–472 (KLNAQPVTLE…VESLKRQLQE (121 aa)) are domain IV, binds dsDNA.

Belongs to the DnaA family. In terms of assembly, oligomerizes as a right-handed, spiral filament on DNA at oriC.

The protein resides in the cytoplasm. Functionally, plays an essential role in the initiation and regulation of chromosomal replication. ATP-DnaA binds to the origin of replication (oriC) to initiate formation of the DNA replication initiation complex once per cell cycle. Binds the DnaA box (a 9 base pair repeat at the origin) and separates the double-stranded (ds)DNA. Forms a right-handed helical filament on oriC DNA; dsDNA binds to the exterior of the filament while single-stranded (ss)DNA is stabiized in the filament's interior. The ATP-DnaA-oriC complex binds and stabilizes one strand of the AT-rich DNA unwinding element (DUE), permitting loading of DNA polymerase. After initiation quickly degrades to an ADP-DnaA complex that is not apt for DNA replication. Binds acidic phospholipids. The protein is Chromosomal replication initiator protein DnaA of Rhodopseudomonas palustris (strain BisB5).